We begin with the raw amino-acid sequence, 588 residues long: 2-succinyl-5-enolpyruvyl-6-hydroxy-3-cyclohexene-1-carboxylate synthase (588 aa).

Belongs to the TPP enzyme family. MenD subfamily. Homodimer. Mg(2+) serves as cofactor. Mn(2+) is required as a cofactor. It depends on thiamine diphosphate as a cofactor.

The catalysed reaction is isochorismate + 2-oxoglutarate + H(+) = 5-enolpyruvoyl-6-hydroxy-2-succinyl-cyclohex-3-ene-1-carboxylate + CO2. Its pathway is quinol/quinone metabolism; 1,4-dihydroxy-2-naphthoate biosynthesis; 1,4-dihydroxy-2-naphthoate from chorismate: step 2/7. It functions in the pathway cofactor biosynthesis; phylloquinone biosynthesis. Its function is as follows. Catalyzes the thiamine diphosphate-dependent decarboxylation of 2-oxoglutarate and the subsequent addition of the resulting succinic semialdehyde-thiamine pyrophosphate anion to isochorismate to yield 2-succinyl-5-enolpyruvyl-6-hydroxy-3-cyclohexene-1-carboxylate (SEPHCHC). This Prochlorococcus marinus (strain MIT 9515) protein is 2-succinyl-5-enolpyruvyl-6-hydroxy-3-cyclohexene-1-carboxylate synthase.